A 298-amino-acid polypeptide reads, in one-letter code: Ribosomal protein L11 methyltransferase (298 aa).

Residues Thr-152, Gly-173, Asp-195, and Asn-234 each coordinate S-adenosyl-L-methionine.

This sequence belongs to the methyltransferase superfamily. PrmA family.

The protein localises to the cytoplasm. The catalysed reaction is L-lysyl-[protein] + 3 S-adenosyl-L-methionine = N(6),N(6),N(6)-trimethyl-L-lysyl-[protein] + 3 S-adenosyl-L-homocysteine + 3 H(+). In terms of biological role, methylates ribosomal protein L11. This is Ribosomal protein L11 methyltransferase from Ralstonia nicotianae (strain ATCC BAA-1114 / GMI1000) (Ralstonia solanacearum).